The chain runs to 177 residues: Tumor necrosis factor ligand superfamily member 18 (177 aa).

The Cytoplasmic portion of the chain corresponds to 1–27 (MCLSHLENMPLSHSRTQGAQRSSWKLW). The chain crosses the membrane as a helical; Signal-anchor for type II membrane protein span at residues 28–48 (LFCSIVMLLFLCSFSWLIFIF). Positions 47–170 (IFLQLETAKE…NNTYWGIILL (124 aa)) constitute a THD domain. Topologically, residues 49-177 (LQLETAKEPC…ILLANPQFIS (129 aa)) are extracellular. C58 and C78 are oxidised to a cystine. N-linked (GlcNAc...) asparagine glycans are attached at residues N129 and N161.

Belongs to the tumor necrosis factor family. In terms of assembly, homodimer. Homotrimer. In terms of tissue distribution, expressed at high levels in the small intestine, ovary, testis, kidney and endothelial cells.

The protein resides in the cell membrane. Its function is as follows. Cytokine that binds to TNFRSF18/AITR/GITR. Regulates T-cell responses. Can function as costimulator and lower the threshold for T-cell activation and T-cell proliferation. Important for interactions between activated T-lymphocytes and endothelial cells. Mediates activation of NF-kappa-B. Triggers increased phosphorylation of STAT1 and up-regulates expression of VCAM1 and ICAM1. Promotes leukocyte adhesion to endothelial cells. Regulates migration of monocytes from the splenic reservoir to sites of inflammation. The protein is Tumor necrosis factor ligand superfamily member 18 of Homo sapiens (Human).